Reading from the N-terminus, the 165-residue chain is 3-isopropylmalate dehydratase small subunit (165 aa).

Belongs to the LeuD family. LeuD type 2 subfamily. In terms of assembly, heterodimer of LeuC and LeuD.

It catalyses the reaction (2R,3S)-3-isopropylmalate = (2S)-2-isopropylmalate. It participates in amino-acid biosynthesis; L-leucine biosynthesis; L-leucine from 3-methyl-2-oxobutanoate: step 2/4. Functionally, catalyzes the isomerization between 2-isopropylmalate and 3-isopropylmalate, via the formation of 2-isopropylmaleate. The protein is 3-isopropylmalate dehydratase small subunit of Hydrogenobaculum sp. (strain Y04AAS1).